The following is a 477-amino-acid chain: V-type ATP synthase beta chain (477 aa).

The protein belongs to the ATPase alpha/beta chains family.

Produces ATP from ADP in the presence of a proton gradient across the membrane. The V-type beta chain is a regulatory subunit. In Anaeromyxobacter dehalogenans (strain 2CP-1 / ATCC BAA-258), this protein is V-type ATP synthase beta chain.